We begin with the raw amino-acid sequence, 124 residues long: Kinocilin (124 aa).

Helical transmembrane passes span leucine 13–valine 33 and valine 40–leucine 60. The segment at proline 80–glycine 124 is disordered. Polar residues predominate over residues arginine 90–arginine 109. The segment covering threonine 110 to glycine 124 has biased composition (basic and acidic residues).

Preferentially expressed in the inner ear and testis. Localizes mainly in the kinocilium of sensory cells in the inner ear. Also present in the manchette of the spermatids, a transient structure enriched in interconnected microtubules (at protein level).

It is found in the membrane. Functionally, may play a role in stabilizing dense microtubular networks or in vesicular trafficking. This is Kinocilin (Kncn) from Mus musculus (Mouse).